The chain runs to 547 residues: Sterol carrier protein 2 (547 aa).

Phosphoserine is present on residues Ser-3 and Ser-8. The residue at position 40 (Lys-40) is an N6-succinyllysine. The residue at position 132 (Lys-132) is an N6-acetyllysine; alternate. Lys-132 bears the N6-succinyllysine; alternate mark. Lys-168 carries the N6-succinyllysine modification. Lys-177 is subject to N6-acetyllysine. At Lys-183 the chain carries N6-acetyllysine; alternate. N6-succinyllysine; alternate is present on Lys-183. An N6-succinyllysine mark is found at Lys-211 and Lys-282. N6-acetyllysine; alternate is present on residues Lys-341, Lys-432, Lys-438, Lys-443, and Lys-453. N6-succinyllysine; alternate is present on residues Lys-341, Lys-432, Lys-438, Lys-443, and Lys-453. Positions 433-543 (ANLIFKEIEK…KLQSLQLQPD (111 aa)) constitute an SCP2 domain. Lys-464 bears the N6-succinyllysine mark. Lys-470 is modified (N6-acetyllysine; alternate). At Lys-470 the chain carries N6-succinyllysine; alternate. Lys-479 carries the post-translational modification N6-succinyllysine. Lys-491 is modified (N6-acetyllysine). Residues Lys-492 and Lys-511 each carry the N6-succinyllysine modification. The residue at position 516 (Ser-516) is a Phosphoserine. 2 positions are modified to N6-succinyllysine: Lys-522 and Lys-534. The residue at position 537 (Ser-537) is a Phosphoserine. An N6-succinyllysine modification is found at Lys-544. Positions 545 to 547 (AKL) match the Microbody targeting signal motif.

In the N-terminal section; belongs to the thiolase-like superfamily. Thiolase family. As to quaternary structure, interacts with PEX5; the interaction is essential for peroxisomal import. In terms of processing, preSCP2, a protein with a molecular mass of about 15 kDa, is processed into its mature form (SCP2) by proteolytic cleavage of a 20 residue leader sequence after translocation into peroxisomes. As to expression, liver &gt; intestine &gt; brain &gt; lung, colon, stomach, spleen, kidney, heart and ovary. Expressed in liver (at protein level).

The protein localises to the peroxisome. It is found in the cytoplasm. Its subcellular location is the mitochondrion. The catalysed reaction is an acyl-CoA + acetyl-CoA = a 3-oxoacyl-CoA + CoA. It catalyses the reaction choloyl-CoA + propanoyl-CoA = 3alpha,7alpha,12alpha-trihydroxy-24-oxo-5beta-cholestan-26-oyl-CoA + CoA. The enzyme catalyses 4,8,12-trimethyltridecanoyl-CoA + propanoyl-CoA = 3-oxopristanoyl-CoA + CoA. It carries out the reaction hexanoyl-CoA + acetyl-CoA = 3-oxooctanoyl-CoA + CoA. The catalysed reaction is tetradecanoyl-CoA + acetyl-CoA = 3-oxohexadecanoyl-CoA + CoA. It catalyses the reaction 3-oxohexadecanedioyl-CoA + CoA = tetradecanedioyl-CoA + acetyl-CoA. The enzyme catalyses propanoyl-CoA + tetradecanoyl-CoA = 3-oxo-2-methylhexadecanoyl-CoA + CoA. It carries out the reaction butanoyl-CoA + acetyl-CoA = 3-oxohexanoyl-CoA + CoA. The catalysed reaction is octanoyl-CoA + acetyl-CoA = 3-oxodecanoyl-CoA + CoA. It catalyses the reaction decanoyl-CoA + acetyl-CoA = 3-oxododecanoyl-CoA + CoA. The enzyme catalyses dodecanoyl-CoA + acetyl-CoA = 3-oxotetradecanoyl-CoA + CoA. It carries out the reaction hexadecanoyl-CoA + acetyl-CoA = 3-oxooctadecanoyl-CoA + CoA. The catalysed reaction is 3-oxo-(9Z-octadecenoyl)-CoA + CoA = (7Z)-hexadecenoyl-CoA + acetyl-CoA. It catalyses the reaction 7-dehydrocholesterol(in) = 7-dehydrocholesterol(out). In terms of biological role, plays a crucial role in the peroxisomal oxidation of branched-chain fatty acids. Catalyzes the last step of the peroxisomal beta-oxidation of branched chain fatty acids and the side chain of the bile acid intermediates di- and trihydroxycoprostanic acids (DHCA and THCA). Also active with medium and long straight chain 3-oxoacyl-CoAs. Stimulates the microsomal conversion of 7-dehydrocholesterol to cholesterol and transfers phosphatidylcholine and 7-dehydrocholesterol between membrances, in vitro. Isoforms SCP2 and SCPx cooperate in peroxisomal oxidation of certain naturally occurring tetramethyl-branched fatty acyl-CoAs. Functionally, mediates the transfer of all common phospholipids, cholesterol and gangliosides from the endoplasmic reticulum to the plasma membrane. May play a role in regulating steroidogenesis. Stimulates the microsomal conversion of 7-dehydrocholesterol to cholesterol. Also binds fatty acids and fatty acyl Coenzyme A (CoA) such as phytanoyl-CoA. Involved in the regulation phospholipid synthesis in endoplasmic reticulum enhancing the incorporation of exogenous fatty acid into glycerides. Seems to stimulate the rate-limiting step in phosphatidic acid formation mediated by GPAT3. Isoforms SCP2 and SCPx cooperate in peroxisomal oxidation of certain naturally occurring tetramethyl-branched fatty acyl-CoAs. This chain is Sterol carrier protein 2, found in Rattus norvegicus (Rat).